Reading from the N-terminus, the 91-residue chain is Small ribosomal subunit protein uS19 (91 aa).

The protein belongs to the universal ribosomal protein uS19 family.

Functionally, protein S19 forms a complex with S13 that binds strongly to the 16S ribosomal RNA. This is Small ribosomal subunit protein uS19 from Synechococcus sp. (strain WH7803).